A 117-amino-acid chain; its full sequence is Aspartate 1-decarboxylase (117 aa).

Ser25 serves as the catalytic Schiff-base intermediate with substrate; via pyruvic acid. A Pyruvic acid (Ser) modification is found at Ser25. Residue Thr57 coordinates substrate. The active-site Proton donor is Tyr58. Residue 72–74 participates in substrate binding; it reads GAA.

The protein belongs to the PanD family. As to quaternary structure, heterooctamer of four alpha and four beta subunits. The cofactor is pyruvate. In terms of processing, is synthesized initially as an inactive proenzyme, which is activated by self-cleavage at a specific serine bond to produce a beta-subunit with a hydroxyl group at its C-terminus and an alpha-subunit with a pyruvoyl group at its N-terminus.

It localises to the cytoplasm. The enzyme catalyses L-aspartate + H(+) = beta-alanine + CO2. The protein operates within cofactor biosynthesis; (R)-pantothenate biosynthesis; beta-alanine from L-aspartate: step 1/1. Functionally, catalyzes the pyruvoyl-dependent decarboxylation of aspartate to produce beta-alanine. This chain is Aspartate 1-decarboxylase, found in Helicobacter pylori (strain J99 / ATCC 700824) (Campylobacter pylori J99).